The primary structure comprises 293 residues: F-box only protein 6 (293 aa).

Positions 10–57 (LDSINELPENILLELFTHVPARQLLLNCRLVCSLWRDLIDLMTLWKRK) constitute an F-box domain. Residues 78-259 (FYFLRSLHRN…VTNSSIVVSP (182 aa)) form the FBA domain. At serine 258 the chain carries Phosphoserine. The span at 261 to 271 (MTRNQASSEAQ) shows a compositional bias: polar residues. Residues 261-285 (MTRNQASSEAQPGQKHGQEEAAQSP) form a disordered region. Phosphoserine is present on serine 284.

In terms of assembly, interacts with VCP. Part of a SCF (SKP1-cullin-F-box) protein ligase complex. Interacts with CHEK1 and CUL1.

It localises to the cytoplasm. It participates in protein modification; protein ubiquitination. Its function is as follows. Substrate-recognition component of some SCF (SKP1-CUL1-F-box protein)-type E3 ubiquitin ligase complexes. Involved in endoplasmic reticulum-associated degradation pathway (ERAD) for misfolded lumenal proteins by recognizing and binding sugar chains on unfolded glycoproteins that are retrotranslocated into the cytosol and promoting their ubiquitination and subsequent degradation. Able to recognize and bind denatured glycoproteins, which are modified with not only high-mannose but also complex-type oligosaccharides. Also recognizes sulfated glycans. Also involved in DNA damage response by specifically recognizing activated CHEK1 (phosphorylated on 'Ser-345'), promoting its ubiquitination and degradation. Ubiquitination of CHEK1 is required to ensure that activated CHEK1 does not accumulate as cells progress through S phase, or when replication forks encounter transient impediments during normal DNA replication. This is F-box only protein 6 (FBXO6) from Homo sapiens (Human).